The following is a 147-amino-acid chain: Hemoglobin subunit beta (147 aa).

Residue Val2 is modified to N-acetylvaline. The Globin domain occupies 3-147 (HLTGEEKGIV…VATALAHKYH (145 aa)). Thr13 is subject to Phosphothreonine. Ser45 carries the post-translational modification Phosphoserine. Lys60 bears the N6-acetyllysine mark. Residue His64 participates in heme b binding. Lys83 is modified (N6-acetyllysine). His93 lines the heme b pocket. Cys94 bears the S-nitrosocysteine mark. Lys145 is modified (N6-acetyllysine).

It belongs to the globin family. Heterotetramer of two alpha chains and two beta chains. As to expression, red blood cells.

Its function is as follows. Involved in oxygen transport from the lung to the various peripheral tissues. This Rhinolophus ferrumequinum (Greater horseshoe bat) protein is Hemoglobin subunit beta (HBB).